The chain runs to 198 residues: Recombination protein RecR (198 aa).

A C4-type zinc finger spans residues 57–72 (CSVCGHITENDPCYIC). The region spanning 80-175 (SVICVVEDDK…KVTRLAQGLS (96 aa)) is the Toprim domain.

Belongs to the RecR family.

May play a role in DNA repair. It seems to be involved in an RecBC-independent recombinational process of DNA repair. It may act with RecF and RecO. The chain is Recombination protein RecR from Staphylococcus aureus (strain Mu3 / ATCC 700698).